A 136-amino-acid polypeptide reads, in one-letter code: MSQSISSSTKAEEVVSVDVSQAKTLLQSGHQYLDVRTQDEFRRGHCEAAKIVNIPYMLNTPQGRVKNQEFLEQVSSLLNPADDILVGCQSGARSLKATTELVAAGYKKVRNVGGGYLAWVDHSFPINTEEEEPSAN.

A Rhodanese domain is found at 26-128 (LQSGHQYLDV…WVDHSFPINT (103 aa)). The active-site Cysteine persulfide intermediate is Cys88.

It is found in the cytoplasm. The enzyme catalyses thiosulfate + hydrogen cyanide = thiocyanate + sulfite + 2 H(+). Functionally, catalyzes the transfer of a sulfur ion from a donor to cyanide or to other thiol compounds. Substrate preference is thiosulfate &gt; 3-mercaptopyruvate. In Arabidopsis thaliana (Mouse-ear cress), this protein is Thiosulfate sulfurtransferase 18 (STR18).